The sequence spans 193 residues: Epididymal-specific lipocalin-12 (193 aa).

Residues 1-19 form the signal peptide; the sequence is MGPWWALWLILTLPQILGG. Cys88 and Cys193 are oxidised to a cystine. N-linked (GlcNAc...) asparagine glycosylation is found at Asn143 and Asn172.

This sequence belongs to the calycin superfamily. Lipocalin family. In terms of assembly, monomer.

It is found in the secreted. Its function is as follows. Binds all-trans retinoic acid and may act as a retinoid carrier protein within the epididymis. May play a role in male fertility. The chain is Epididymal-specific lipocalin-12 (Lcn12) from Rattus norvegicus (Rat).